A 72-amino-acid polypeptide reads, in one-letter code: Large ribosomal subunit protein bL31 (72 aa).

Zn(2+) contacts are provided by C16, C18, C36, and C39.

The protein belongs to the bacterial ribosomal protein bL31 family. Type A subfamily. As to quaternary structure, part of the 50S ribosomal subunit. It depends on Zn(2+) as a cofactor.

In terms of biological role, binds the 23S rRNA. This is Large ribosomal subunit protein bL31 from Geobacter sp. (strain M21).